We begin with the raw amino-acid sequence, 37 residues long: Neuropeptide Y1-like conopeptide (37 aa).

Phenylalanine 37 carries the post-translational modification Phenylalanine amide.

This sequence belongs to the NPY family. Expressed by the venom duct.

Its subcellular location is the secreted. In terms of biological role, causes hyperactivity such as jumping, rapid circling and tail flicking, when intraventricularly injected into mice brain. This is Neuropeptide Y1-like conopeptide from Conus betulinus (Beech cone).